A 316-amino-acid chain; its full sequence is Malate dehydrogenase (316 aa).

NAD(+) contacts are provided by residues glycine 12–glycine 17 and aspartate 36. Positions 85 and 91 each coordinate substrate. NAD(+) is bound by residues asparagine 98 and valine 121–asparagine 123. 2 residues coordinate substrate: asparagine 123 and arginine 154. Histidine 178 acts as the Proton acceptor in catalysis.

The protein belongs to the LDH/MDH superfamily. MDH type 3 family.

The catalysed reaction is (S)-malate + NAD(+) = oxaloacetate + NADH + H(+). Functionally, catalyzes the reversible oxidation of malate to oxaloacetate. This is Malate dehydrogenase from Wolbachia sp. subsp. Brugia malayi (strain TRS).